We begin with the raw amino-acid sequence, 398 residues long: Elongation factor Tu (398 aa).

Residues 10 to 207 (KPHVNIGTIG…TVDSYIPEPE (198 aa)) form the tr-type G domain. Residues 19–26 (GHVDHGKT) are G1. Position 19-26 (19-26 (GHVDHGKT)) interacts with GTP. Mg(2+) is bound at residue Thr-26. The G2 stretch occupies residues 63–67 (GITIN). The segment at 84–87 (DAPG) is G3. GTP is bound by residues 84–88 (DAPGH) and 139–142 (NKVD). Positions 139–142 (NKVD) are G4. Residues 177 to 179 (SAL) are G5.

Belongs to the TRAFAC class translation factor GTPase superfamily. Classic translation factor GTPase family. EF-Tu/EF-1A subfamily. As to quaternary structure, monomer.

It localises to the cytoplasm. It catalyses the reaction GTP + H2O = GDP + phosphate + H(+). Its function is as follows. GTP hydrolase that promotes the GTP-dependent binding of aminoacyl-tRNA to the A-site of ribosomes during protein biosynthesis. In Streptococcus pyogenes serotype M28 (strain MGAS6180), this protein is Elongation factor Tu.